The following is a 288-amino-acid chain: Diaminopimelate epimerase (288 aa).

Residues asparagine 14 and asparagine 67 each coordinate substrate. Cysteine 76 functions as the Proton donor in the catalytic mechanism. Substrate contacts are provided by residues 77 to 78, asparagine 166, asparagine 199, and 217 to 218; these read GN and ER. Residue cysteine 226 is the Proton acceptor of the active site. 227 to 228 contacts substrate; sequence GT.

It belongs to the diaminopimelate epimerase family. In terms of assembly, homodimer.

The protein localises to the cytoplasm. It catalyses the reaction (2S,6S)-2,6-diaminopimelate = meso-2,6-diaminopimelate. It participates in amino-acid biosynthesis; L-lysine biosynthesis via DAP pathway; DL-2,6-diaminopimelate from LL-2,6-diaminopimelate: step 1/1. Its function is as follows. Catalyzes the stereoinversion of LL-2,6-diaminopimelate (L,L-DAP) to meso-diaminopimelate (meso-DAP), a precursor of L-lysine and an essential component of the bacterial peptidoglycan. In Bacillus mycoides (strain KBAB4) (Bacillus weihenstephanensis), this protein is Diaminopimelate epimerase.